The primary structure comprises 302 residues: Rab effector Noc2 (302 aa).

In terms of domain architecture, RabBD spans 41 to 158 (QRRTQCLSPG…KRSGAWFYKG (118 aa)). An FYVE-type zinc finger spans residues 89–146 (GNGVSQCLLCGEMLGFLGSSSVFCKDCRKKVCTKCGIEASPGQKRPLWLCKICSEQRE). Positions 95, 98, 112, 115, 120, 123, 138, and 141 each coordinate Zn(2+). Disordered regions lie at residues 174–194 (DPHFRPLPVEPTEPQPQSAEV) and 206–302 (VSSD…TTHY). At serine 248 the chain carries Phosphoserine. Over residues 258–269 (SHLSGSQSSLGS) the composition is skewed to low complexity.

In terms of assembly, recruited to dense-core vesicles through specific interaction with RAB27A in endocrine cells. Interacts with RAB3A, RAB3B, RAB3C and RAB3D. Interacts with ZYX. In terms of tissue distribution, highly expressed in pancreatic islets and parotid. High to moderate expression in adrenal gland, pituitary gland and ovary.

Its subcellular location is the cytoplasm. The protein localises to the cytoplasmic vesicle. The protein resides in the secretory vesicle membrane. In terms of biological role, rab GTPase effector involved in the late steps of regulated exocytosis, both in endocrine and exocrine cells. Regulates the exocytosis of dense-core vesicles in neuroendocrine cells through interaction with RAB27A. Acts as a potential RAB3B effector protein in epithelial cells. The chain is Rab effector Noc2 (Rph3al) from Rattus norvegicus (Rat).